We begin with the raw amino-acid sequence, 761 residues long: Proline-rich extensin-like protein EPR1 (761 aa).

An N-terminal signal peptide occupies residues 1–24 (MRVPLIDFLRFLVLILSLSGASVA). Residues 63–77 (YSPPIYPPPIQKPPT) form a 1; degenerate repeat. The tract at residues 63–735 (YSPPIYPPPI…PPVQVPPTPT (673 aa)) is 40 X 17 AA approximate tandem repeats of Y-S-P-P-[IV]-[KY]-P-P-P-x(1,2)-K-P-P-T-P-T. 39 tandem repeats follow at residues 78–94 (YSPP…PTPT), 95–111 (YSPP…PTPT), 112–128 (YSPP…PTPT), 129–145 (YSPP…PTPS), 146–162 (YSPP…PTPT), 163–179 (YSPP…PTPT), 180–195 (YSPP…PTPI), 196–212 (YSPP…PTPI), 213–229 (YSPP…PTPT), 230–246 (YSPP…PTPI), 247–263 (YSPP…PTPI), 264–280 (YSPP…PTPI), 281–297 (YSPP…PTPT), 298–314 (YSPP…PTPT), 315–331 (YSPP…PTPT), 332–347 (YSPP…PTPI), 348–364 (YSPP…PTPI), 365–381 (YSPP…PTPI), 382–398 (YSPP…PTPT), 399–415 (YSPP…PTPT), 416–431 (YSPP…PTPI), 432–448 (YSPP…PTPI), 449–465 (YSPP…PTPT), 466–481 (YSPP…PTPT), 482–498 (YSPP…PTPT), 499–515 (YSPP…PTPT), 516–531 (YSPP…PTPT), 532–548 (YSPP…PTPT), 549–565 (YSPP…PTPT), 566–582 (YSPP…PTPT), 583–599 (YSPP…PTPT), 600–616 (YSPP…PTPT), 617–633 (YSPP…PTPT), 634–650 (YSPP…PTPT), 651–667 (YSPP…PTPT), 668–684 (YSPP…PTPT), 685–701 (YSPP…PTPT), 702–718 (YSPP…PTPT), and 719–735 (YSPP…PTPT). The segment covering 111 to 750 (TYSPPIYPPP…QGGYGTPPPY (640 aa)) has biased composition (pro residues). The segment at 111-761 (TYSPPIYPPP…YLSHPIDIRN (651 aa)) is disordered.

The protein belongs to the extensin family. In terms of tissue distribution, specifically expressed in endosperm during seed germination, at the site of radicle protrusion.

It is found in the secreted. Its subcellular location is the primary cell wall. Functionally, may have a specific role in modifying the cell-wall structure, specifically during seed germination, thus facilitating radicle protrusion. The chain is Proline-rich extensin-like protein EPR1 (EPR1) from Arabidopsis thaliana (Mouse-ear cress).